Reading from the N-terminus, the 595-residue chain is Coagulation factor XII (595 aa).

The N-terminal stretch at 1–19 (MTALLFLGSLLMSLDLTLS) is a signal peptide. Residues 41-89 (VDGKLCHFPFQYHRRLYHKCIHKGQPGSRPWCATTPNFDEDQQWGYCLE) form the Fibronectin type-II domain. 13 disulfides stabilise this stretch: Cys46–Cys72, Cys60–Cys87, Cys97–Cys109, Cys103–Cys118, Cys120–Cys129, Cys134–Cys162, Cys160–Cys169, Cys177–Cys188, Cys182–Cys197, Cys199–Cys208, Cys216–Cys294, Cys237–Cys276, and Cys265–Cys289. Residues 93–130 (VKDHCSKHSPCHKGGTCVNTPNGPHCLCPEHLTGKHCQ) form the EGF-like 1 domain. The O-linked (Fuc) threonine glycan is linked to Thr108. The region spanning 132-172 (EKCFESQLLKFFHENEIWFRTGPGGVARCQCKGPQAVCKLL) is the Fibronectin type-I domain. The EGF-like 2 domain occupies 173–209 (TSQVCRVNPCLNGGTCLLVEDHRLCHCPAGYAGPFCD). Residues 215–294 (TCYEDRGLSY…SWDYCDLEQC (80 aa)) form the Kringle domain. Asn248 is a glycosylation site (N-linked (GlcNAc...) asparagine). Thr298 carries an O-linked (GalNAc...) threonine glycan. The disordered stretch occupies residues 302–332 (PVSPESHDMLKPRPPILQSSPRDSTRNQNVV). Ser307 carries an O-linked (GalNAc...) serine glycan. Polar residues predominate over residues 318 to 332 (LQSSPRDSTRNQNVV). An O-linked (GalNAc...) threonine glycan is attached at Thr326. 7 cysteine pairs are disulfide-bonded: Cys340-Cys466, Cys378-Cys394, Cys386-Cys455, Cys417-Cys420, Cys480-Cys549, Cys512-Cys528, and Cys539-Cys570. In terms of domain architecture, Peptidase S1 spans 354-594 (VVGGLVALPG…YLDWIQEHTA (241 aa)). The Charge relay system role is filled by His393. Asn414 carries an N-linked (GlcNAc...) asparagine glycan. The Charge relay system role is filled by Asp442. Catalysis depends on Ser543, which acts as the Charge relay system.

Belongs to the peptidase S1 family. As to quaternary structure, interacts with HRG; the interaction, which is enhanced in the presence of zinc ions and inhibited by heparin-binding, inhibits factor XII autoactivation and contact-initiated coagulation. In terms of processing, O- and N-glycosylated.

Its subcellular location is the secreted. The enzyme catalyses Selective cleavage of Arg-|-Ile bonds in factor VII to form factor VIIa and factor XI to form factor XIa.. Its activity is regulated as follows. Activity is promoted in the presence of negatively charged surfaces. Its function is as follows. Factor XII is a serum glycoprotein that participates in the initiation of blood coagulation, fibrinolysis, and the generation of bradykinin and angiotensin. Prekallikrein is cleaved by factor XII to form kallikrein, which then cleaves factor XII first to alpha-factor XIIa and then trypsin cleaves it to beta-factor XIIa. Alpha-factor XIIa activates factor XI to factor XIa. The polypeptide is Coagulation factor XII (F12) (Rattus norvegicus (Rat)).